We begin with the raw amino-acid sequence, 103 residues long: Large ribosomal subunit protein bL21 (103 aa).

Belongs to the bacterial ribosomal protein bL21 family. As to quaternary structure, part of the 50S ribosomal subunit. Contacts protein L20.

Its function is as follows. This protein binds to 23S rRNA in the presence of protein L20. The protein is Large ribosomal subunit protein bL21 of Shigella sonnei (strain Ss046).